The following is a 118-amino-acid chain: Large ribosomal subunit protein bL20 (118 aa).

This sequence belongs to the bacterial ribosomal protein bL20 family.

Its function is as follows. Binds directly to 23S ribosomal RNA and is necessary for the in vitro assembly process of the 50S ribosomal subunit. It is not involved in the protein synthesizing functions of that subunit. The polypeptide is Large ribosomal subunit protein bL20 (Kosmotoga olearia (strain ATCC BAA-1733 / DSM 21960 / TBF 19.5.1)).